The primary structure comprises 316 residues: Transaldolase (316 aa).

Lys125 serves as the catalytic Schiff-base intermediate with substrate.

This sequence belongs to the transaldolase family. Type 1 subfamily. Homodimer.

It is found in the cytoplasm. It catalyses the reaction D-sedoheptulose 7-phosphate + D-glyceraldehyde 3-phosphate = D-erythrose 4-phosphate + beta-D-fructose 6-phosphate. The protein operates within carbohydrate degradation; pentose phosphate pathway; D-glyceraldehyde 3-phosphate and beta-D-fructose 6-phosphate from D-ribose 5-phosphate and D-xylulose 5-phosphate (non-oxidative stage): step 2/3. In terms of biological role, transaldolase is important for the balance of metabolites in the pentose-phosphate pathway. This Acidovorax ebreus (strain TPSY) (Diaphorobacter sp. (strain TPSY)) protein is Transaldolase.